Here is a 95-residue protein sequence, read N- to C-terminus: Integration host factor subunit beta (95 aa).

The interval 56–76 is disordered; it reads RAPRTGRNPKTGTSVELDGKY.

This sequence belongs to the bacterial histone-like protein family. As to quaternary structure, heterodimer of an alpha and a beta chain.

In terms of biological role, this protein is one of the two subunits of integration host factor, a specific DNA-binding protein that functions in genetic recombination as well as in transcriptional and translational control. The chain is Integration host factor subunit beta from Shewanella denitrificans (strain OS217 / ATCC BAA-1090 / DSM 15013).